A 94-amino-acid polypeptide reads, in one-letter code: Probable Fe(2+)-trafficking protein (94 aa).

It belongs to the Fe(2+)-trafficking protein family.

In terms of biological role, could be a mediator in iron transactions between iron acquisition and iron-requiring processes, such as synthesis and/or repair of Fe-S clusters in biosynthetic enzymes. This Haemophilus ducreyi (strain 35000HP / ATCC 700724) protein is Probable Fe(2+)-trafficking protein.